The primary structure comprises 127 residues: Fluoride-specific ion channel FluC (127 aa).

Transmembrane regions (helical) follow at residues 4 to 24 (LLCA…WLGM), 35 to 55 (IGTL…LAWF), 71 to 91 (TGFC…VFLL), and 101 to 121 (LNVM…FWLF). G75 and T78 together coordinate Na(+).

This sequence belongs to the fluoride channel Fluc/FEX (TC 1.A.43) family.

It is found in the cell inner membrane. It catalyses the reaction fluoride(in) = fluoride(out). Its activity is regulated as follows. Na(+) is not transported, but it plays an essential structural role and its presence is essential for fluoride channel function. In terms of biological role, fluoride-specific ion channel. Important for reducing fluoride concentration in the cell, thus reducing its toxicity. The polypeptide is Fluoride-specific ion channel FluC (Klebsiella pneumoniae (strain 342)).